A 164-amino-acid polypeptide reads, in one-letter code: Large ribosomal subunit protein uL11 (164 aa).

Belongs to the universal ribosomal protein uL11 family. In terms of assembly, part of the ribosomal stalk of the 50S ribosomal subunit. Interacts with L10 and the large rRNA to form the base of the stalk. L10 forms an elongated spine to which L12 dimers bind in a sequential fashion forming a multimeric L10(L12)X complex.

Its function is as follows. Forms part of the ribosomal stalk which helps the ribosome interact with GTP-bound translation factors. The chain is Large ribosomal subunit protein uL11 from Pyrococcus abyssi (strain GE5 / Orsay).